A 287-amino-acid polypeptide reads, in one-letter code: 4-diphosphocytidyl-2-C-methyl-D-erythritol kinase (287 aa).

The active site involves Lys-12. 95–105 (PAQAGMGGGSS) lines the ATP pocket. Asp-137 is a catalytic residue.

This sequence belongs to the GHMP kinase family. IspE subfamily.

It carries out the reaction 4-CDP-2-C-methyl-D-erythritol + ATP = 4-CDP-2-C-methyl-D-erythritol 2-phosphate + ADP + H(+). It functions in the pathway isoprenoid biosynthesis; isopentenyl diphosphate biosynthesis via DXP pathway; isopentenyl diphosphate from 1-deoxy-D-xylulose 5-phosphate: step 3/6. Catalyzes the phosphorylation of the position 2 hydroxy group of 4-diphosphocytidyl-2C-methyl-D-erythritol. This chain is 4-diphosphocytidyl-2-C-methyl-D-erythritol kinase, found in Delftia acidovorans (strain DSM 14801 / SPH-1).